A 61-amino-acid chain; its full sequence is Photosystem II reaction center X protein (61 aa).

A helical membrane pass occupies residues 26–46; that stretch reads IGSFIAAALLIVIPATAFLIF.

Belongs to the PsbX family. Type 2 subfamily. PSII consists of a core antenna complex that captures photons, and an electron transfer chain that converts photonic excitation into a charge separation. PSII forms dimeric complexes.

The protein localises to the cellular thylakoid membrane. In terms of biological role, involved in the binding and/or turnover of quinones at the Q(B) site of Photosystem II. The sequence is that of Photosystem II reaction center X protein from Prochlorococcus marinus (strain MIT 9312).